A 153-amino-acid chain; its full sequence is ORM1-like protein 2 (153 aa).

Over 1-21 (MNVGVAHSEVNPNTRVMSSRG) the chain is Cytoplasmic. 2 consecutive transmembrane segments (helical) span residues 22 to 42 (IWLAYVISVAALHVILLSIPF) and 43 to 63 (FSIPVVWTLTNVIHNLVMYLL). At 64–105 (LHTVKGTPFETPDQGKDRLLTHWEQIDYGMQCTSSRKFLSIS) the chain is on the cytoplasmic side. Residues 106–126 (PVVLYLLTSFYIKYDPAHFMI) traverse the membrane as a helical segment. The Extracellular segment spans residues 127–153 (NTASLLSVLLPKLPQFHGVRVFGINKY).

Belongs to the ORM family. In terms of assembly, ceramide-sensitive subunit of the serine palmitoyltransferase (SPT) complex, which is also composed of SPTLC1, SPTLC2/3 and SPTSSA/B.

It is found in the endoplasmic reticulum membrane. Functionally, plays an essential role in the homeostatic regulation of sphingolipid de novo biosynthesis by modulating the activity of the serine palmitoyltransferase (SPT) in response to ceramide levels. When complexed to SPT, the binding of ceramides to its N-terminus stabilizes a conformation that block SPT substrate entry, hence preventing SPT catalytic activity. Through this mechanism, maintains ceramide levels at sufficient concentrations for the production of complex sphingolipids, but which prevents the accumulation of ceramides to levels that trigger apoptosis. The sequence is that of ORM1-like protein 2 (ORMDL2) from Gallus gallus (Chicken).